The primary structure comprises 446 residues: Glutamate-1-semialdehyde 2,1-aminomutase (446 aa).

Position 263 is an N6-(pyridoxal phosphate)lysine (lysine 263).

This sequence belongs to the class-III pyridoxal-phosphate-dependent aminotransferase family. HemL subfamily. Pyridoxal 5'-phosphate is required as a cofactor.

The protein resides in the cytoplasm. The catalysed reaction is (S)-4-amino-5-oxopentanoate = 5-aminolevulinate. Its pathway is porphyrin-containing compound metabolism; protoporphyrin-IX biosynthesis; 5-aminolevulinate from L-glutamyl-tRNA(Glu): step 2/2. The sequence is that of Glutamate-1-semialdehyde 2,1-aminomutase from Haloquadratum walsbyi (strain DSM 16790 / HBSQ001).